A 206-amino-acid chain; its full sequence is N-(5'-phosphoribosyl)anthranilate isomerase (206 aa).

This sequence belongs to the TrpF family.

It catalyses the reaction N-(5-phospho-beta-D-ribosyl)anthranilate = 1-(2-carboxyphenylamino)-1-deoxy-D-ribulose 5-phosphate. It functions in the pathway amino-acid biosynthesis; L-tryptophan biosynthesis; L-tryptophan from chorismate: step 3/5. This chain is N-(5'-phosphoribosyl)anthranilate isomerase, found in Chlamydia felis (strain Fe/C-56) (Chlamydophila felis).